The sequence spans 361 residues: Isopentenyl-diphosphate delta-isomerase (361 aa).

12–13 (RK) provides a ligand contact to substrate. Residues Ser-70, 71–73 (SMT), Ser-101, and Asn-130 contribute to the FMN site. 101 to 103 (SMR) contacts substrate. Gln-165 is a substrate binding site. Glu-166 contributes to the Mg(2+) binding site. FMN-binding positions include Lys-197 and 310-311 (AG).

The protein belongs to the IPP isomerase type 2 family. As to quaternary structure, homooctamer. Dimer of tetramers. The cofactor is FMN. NADPH serves as cofactor. Requires Mg(2+) as cofactor.

Its subcellular location is the cytoplasm. It carries out the reaction isopentenyl diphosphate = dimethylallyl diphosphate. Its function is as follows. Involved in the biosynthesis of isoprenoids. Catalyzes the 1,3-allylic rearrangement of the homoallylic substrate isopentenyl (IPP) to its allylic isomer, dimethylallyl diphosphate (DMAPP). The protein is Isopentenyl-diphosphate delta-isomerase of Chlorobium luteolum (strain DSM 273 / BCRC 81028 / 2530) (Pelodictyon luteolum).